Here is a 76-residue protein sequence, read N- to C-terminus: Exodeoxyribonuclease 7 small subunit (76 aa).

Belongs to the XseB family. As to quaternary structure, heterooligomer composed of large and small subunits.

Its subcellular location is the cytoplasm. It catalyses the reaction Exonucleolytic cleavage in either 5'- to 3'- or 3'- to 5'-direction to yield nucleoside 5'-phosphates.. Bidirectionally degrades single-stranded DNA into large acid-insoluble oligonucleotides, which are then degraded further into small acid-soluble oligonucleotides. The protein is Exodeoxyribonuclease 7 small subunit of Arthrobacter sp. (strain FB24).